Consider the following 395-residue polypeptide: Probable peptidoglycan glycosyltransferase FtsW (395 aa).

Residues Met-1–Arg-24 are Cytoplasmic-facing. A helical membrane pass occupies residues Leu-25–Ile-45. Residues Ser-46–Gln-62 lie on the Periplasmic side of the membrane. A helical transmembrane segment spans residues Ile-63–Thr-83. Over Trp-84 to Arg-86 the chain is Cytoplasmic. A helical transmembrane segment spans residues Ala-87 to Val-107. The Periplasmic portion of the chain corresponds to Gly-108–Arg-116. The chain crosses the membrane as a helical span at residues Trp-117 to Leu-137. The Cytoplasmic segment spans residues Tyr-138–Thr-152. The chain crosses the membrane as a helical span at residues Ser-153 to Leu-173. Residues Gln-174–Gly-178 lie on the Periplasmic side of the membrane. Residues Thr-179–Trp-199 form a helical membrane-spanning segment. Position 200 (Arg-200) is a topological domain, cytoplasmic. Residues Phe-201–Tyr-221 form a helical membrane-spanning segment. Topologically, residues Arg-222 to Asp-276 are periplasmic. The chain crosses the membrane as a helical span at residues Phe-277–Leu-297. Topologically, residues Phe-298–Arg-316 are cytoplasmic. The helical transmembrane segment at Leu-317–Ile-337 threads the bilayer. Over Asn-338 to Thr-352 the chain is Periplasmic. The helical transmembrane segment at Leu-353–Leu-373 threads the bilayer. Residues Leu-374–Ser-395 lie on the Cytoplasmic side of the membrane.

Belongs to the SEDS family. FtsW subfamily.

It is found in the cell inner membrane. It catalyses the reaction [GlcNAc-(1-&gt;4)-Mur2Ac(oyl-L-Ala-gamma-D-Glu-L-Lys-D-Ala-D-Ala)](n)-di-trans,octa-cis-undecaprenyl diphosphate + beta-D-GlcNAc-(1-&gt;4)-Mur2Ac(oyl-L-Ala-gamma-D-Glu-L-Lys-D-Ala-D-Ala)-di-trans,octa-cis-undecaprenyl diphosphate = [GlcNAc-(1-&gt;4)-Mur2Ac(oyl-L-Ala-gamma-D-Glu-L-Lys-D-Ala-D-Ala)](n+1)-di-trans,octa-cis-undecaprenyl diphosphate + di-trans,octa-cis-undecaprenyl diphosphate + H(+). It participates in cell wall biogenesis; peptidoglycan biosynthesis. Its function is as follows. Peptidoglycan polymerase that is essential for cell division. The chain is Probable peptidoglycan glycosyltransferase FtsW from Halorhodospira halophila (strain DSM 244 / SL1) (Ectothiorhodospira halophila (strain DSM 244 / SL1)).